Here is a 193-residue protein sequence, read N- to C-terminus: Cerebellin-1 (193 aa).

The N-terminal stretch at 1 to 21 (MLGVLELLLLGAAWLAGPARG) is a signal peptide. Residue Asn23 is glycosylated (N-linked (GlcNAc...) asparagine). An essential for interaction with NRXN1 and linker of two C1q trimers into disulfide-linked hexamers region spans residues 34 to 38 (CLVVC). The C1q domain occupies 57-193 (SGSAKVAFSA…TFSGFLVFPL (137 aa)). The segment at 62–193 (VAFSAIRSTN…TFSGFLVFPL (132 aa)) is necessary for interaction with CBLN3, and homotrimerization. Residue Asn79 is glycosylated (N-linked (GlcNAc...) asparagine). Positions 122–147 (YNRQTIQVSLMLNGWPVISAFAGDQD) are essential for interaction with GRID2.

Homohexamer; disulfide-linked homotrimers. The trimers associate via N-terminal cysteine residues to form disulfide-linked hexamers. May form oligomers with CBLN2, CBLN3 AND CBLN4 prior to secretion. Once secreted, does not interact with other CBLN family members. Interacts with GRID1. Interacts with NRXN1 and NRXN2 long (alpha) and short (beta) isoforms produced by alternative promoter usage. Competes with NLGN1 for NRXN1-binding. Weakly interacts with NRXN3 short isoform and not at all with NRXN3 long isoform. Interacts (via C1q domain) with GRID2; GRID2-binding is calcium-independent; CBLN1 hexamers anchor GRID2 N-terminal domain dimers to monomeric NRXN1 isoform beta; promotes synaptogenesis and mediates the D-Serine-dependent long term depression signals and AMPA receptor endocytosis. Interacts with OTOL1. The proteolytic processing to yield cerebellin seems to occur either prior to the secretion by presynaptic neurons and subsequent oligomerization or in some other location after release of the mature protein. In terms of processing, sialoglycoprotein. In the Purkinje cells postsynaptic structures. In the cerebellum, cerebellin is much less abundant than [des-Ser1]-cerebellin.

Its subcellular location is the secreted. It localises to the postsynaptic cell membrane. Its function is as follows. Required for synapse integrity and synaptic plasticity. During cerebellar synapse formation, essential for the matching and maintenance of pre- and post-synaptic elements at parallel fiber-Purkinje cell synapses, the establishment of the proper pattern of climbing fiber-Purkinje cell innervation, and induction of long-term depression at parallel fiber-Purkinje cell synapses. Plays a role as a synaptic organizer that acts bidirectionally on both pre- and post-synaptic components. On the one hand induces accumulation of synaptic vesicles in the pre-synaptic part by binding with NRXN1 and in other hand induces clustering of GRID2 and its associated proteins at the post-synaptic site through association of GRID2. NRXN1-CBLN1-GRID2 complex directly induces parallel fiber protrusions that encapsulate spines of Purkinje cells leading to accumulation of GRID2 and synaptic vesicles. Required for CBLN3 export from the endoplasmic reticulum and secretion. NRXN1-CBLN1-GRID2 complex mediates the D-Serine-dependent long term depression signals and AMPA receptor endocytosis. Essential for long-term maintenance but not establishment of excitatory synapses. Inhibits the formation and function of inhibitory GABAergic synapses in cerebellar Purkinje cells. In terms of biological role, the cerebellin peptide exerts neuromodulatory functions. Directly stimulates norepinephrine release via the adenylate cyclase/PKA-dependent signaling pathway; and indirectly enhances adrenocortical secretion in vivo, through a paracrine mechanism involving medullary catecholamine release. The polypeptide is Cerebellin-1 (CBLN1) (Homo sapiens (Human)).